A 159-amino-acid chain; its full sequence is uncharacterized protein (159 aa).

Disordered regions lie at residues 1 to 23 (MEQDWQPGEEVTPGPEPCSKGQA) and 91 to 110 (AGGGRREQSQKPCSNGGPAA).

This is an uncharacterized protein from Homo sapiens (Human).